A 478-amino-acid chain; its full sequence is Endoglucanase 18 (478 aa).

A signal peptide spans 1 to 21 (MGKLLVVMLIGMFLAFESLEA). The N-linked (GlcNAc...) asparagine glycan is linked to Asn29. The Nucleophile role is filled by Asp76. The active site involves His398. Residues 433-452 (HTGAIVGGPNSSDQYSDKRT) are disordered. N-linked (GlcNAc...) asparagine glycosylation occurs at Asn442. Residues Asp449 and Glu458 contribute to the active site.

This sequence belongs to the glycosyl hydrolase 9 (cellulase E) family.

The protein localises to the secreted. It catalyses the reaction Endohydrolysis of (1-&gt;4)-beta-D-glucosidic linkages in cellulose, lichenin and cereal beta-D-glucans.. The protein is Endoglucanase 18 of Arabidopsis thaliana (Mouse-ear cress).